The following is a 521-amino-acid chain: Probable inorganic phosphate transporter 1-3 (521 aa).

Over 1-24 (MADQQLGVLKALDVAKTQLYHFTA) the chain is Cytoplasmic. The chain crosses the membrane as a helical span at residues 25-45 (IVIAGMGFFTDAYDLFCVSLV). Over 46 to 70 (TKLLGRLYYFNPTSAKPGSLPPHVA) the chain is Extracellular. The chain crosses the membrane as a helical span at residues 71 to 91 (AAVNGVALCGTLAGQLFFGWL). Residues 92 to 99 (GDKLGRKK) are Cytoplasmic-facing. Residues 100-120 (VYGITLIMMILCSVASGLSLG) traverse the membrane as a helical segment. At 121–131 (NSAKGVMTTLC) the chain is on the extracellular side. Residues 132 to 152 (FFRFWLGFGIGGDYPLSATIM) traverse the membrane as a helical segment. Residues 153–161 (SEYANKKTR) are Cytoplasmic-facing. A helical transmembrane segment spans residues 162–182 (GAFIAAVFAMQGVGILAGGFV). The Extracellular portion of the chain corresponds to 183-211 (ALAVSSIFDKKFPSPTYEQDRFLSTPPQA). The chain crosses the membrane as a helical span at residues 212-232 (DYIWRIIVMFGALPAALTYYW). Residues 233-292 (RMKMPETARYTALVAKNIKQATADMSKVLQTDLELEERVEDDVKDPKKNYGLFSKEFLRR) are Cytoplasmic-facing. The chain crosses the membrane as a helical span at residues 293 to 313 (HGLHLLGTTSTWFLLDIAFYS). Residues 314-348 (QNLFQKDIFSAIGWIPKAATMNAIHEVFKIARAQT) are Extracellular-facing. Residues 349–369 (LIALCSTVPGYWFTVAFIDII) traverse the membrane as a helical segment. Over 370–371 (GR) the chain is Cytoplasmic. The helical transmembrane segment at 372–392 (FAIQLMGFFMMTVFMFAIAFP) threads the bilayer. Over 393–402 (YNHWILPDNR) the chain is Extracellular. A helical membrane pass occupies residues 403-423 (IGFVVMYSLTFFFANFGPNAT). Over 424–441 (TFIVPAEIFPARLRSTCH) the chain is Cytoplasmic. Residues 442–462 (GISAATGKAGAIVGAFGFLYA) traverse the membrane as a helical segment. Residues 463–484 (AQPQDKTKTDAGYPPGIGVKNS) lie on the Extracellular side of the membrane. The helical transmembrane segment at 485-505 (LIMLGVINFVGMLFTFLVPEP) threads the bilayer. Over 506 to 521 (KGKSLEELSGEAEVDK) the chain is Cytoplasmic.

It belongs to the major facilitator superfamily. Phosphate:H(+) symporter (TC 2.A.1.9) family. In terms of tissue distribution, mainly expressed in roots, especially in the stele of the primary root, the pericycle and trichoblasts of secondary roots. To a lower extent, present in hydathodes and vascular tissues of young leaves.

The protein resides in the membrane. In terms of biological role, high-affinity transporter for external inorganic phosphate. The protein is Probable inorganic phosphate transporter 1-3 (PHT1-3) of Arabidopsis thaliana (Mouse-ear cress).